The following is a 60-amino-acid chain: MAVPKFKPSKSRSRTRRSINMRKKIPQLQECSNCGYLVIRHRVCLKCGYYKNIQYLELGL.

This sequence belongs to the bacterial ribosomal protein bL32 family.

The polypeptide is Large ribosomal subunit protein bL32 (Borrelia hermsii (strain HS1 / DAH)).